Reading from the N-terminus, the 440-residue chain is tRNA(Ile)-lysidine synthase (440 aa).

19–24 (SGGLDS) contacts ATP.

It belongs to the tRNA(Ile)-lysidine synthase family.

The protein localises to the cytoplasm. It catalyses the reaction cytidine(34) in tRNA(Ile2) + L-lysine + ATP = lysidine(34) in tRNA(Ile2) + AMP + diphosphate + H(+). Functionally, ligates lysine onto the cytidine present at position 34 of the AUA codon-specific tRNA(Ile) that contains the anticodon CAU, in an ATP-dependent manner. Cytidine is converted to lysidine, thus changing the amino acid specificity of the tRNA from methionine to isoleucine. This Buchnera aphidicola subsp. Acyrthosiphon pisum (strain APS) (Acyrthosiphon pisum symbiotic bacterium) protein is tRNA(Ile)-lysidine synthase.